Consider the following 284-residue polypeptide: MGLAGVKKKQQIGVDPRNSKWAKDTNRLGFKLLSSYGWVNGNGLGEKQHGRIHNIKVSLKDDTLGIGAKATNDLEWSGLGEFNAIFGRLNGDESAYGVYAEKAKVQQLTYERQSANEKGLKSLELSRRFVLGGTFTSEFSEWMQKAEEDEDRVCEDASSSDEAKREKRKKHSSKKKSKKKTSTGSALDPKKLEKITKKKKKEHKKKDKESSSKKRKSGSSDKEEKKKKKIKLKDKPESTSSVEKVKEGNRPASIHFHTRRKFLAQKRAAVSDPVALREILGIKG.

One can recognise a G-patch domain in the interval 25–71 (TNRLGFKLLSSYGWVNGNGLGEKQHGRIHNIKVSLKDDTLGIGAKAT). The disordered stretch occupies residues 149 to 253 (DEDRVCEDAS…KVKEGNRPAS (105 aa)). Phosphoserine is present on residues serine 159 and serine 160. Composition is skewed to basic residues over residues 166 to 181 (EKRKKHSSKKKSKKKT) and 196 to 206 (TKKKKKEHKKK). 2 stretches are compositionally biased toward basic and acidic residues: residues 207-224 (DKESSSKKRKSGSSDKEE) and 233-249 (KDKPESTSSVEKVKEGN).

Belongs to the PINX1 family.

It is found in the nucleus. Its subcellular location is the nucleolus. Its function is as follows. Involved in rRNA-processing at A0, A1 and A2 sites and negatively regulates telomerase. The protein is Protein pxr1 (pxr1) of Schizosaccharomyces pombe (strain 972 / ATCC 24843) (Fission yeast).